The chain runs to 117 residues: Ubiquitin-like protein pmt3/smt3 (117 aa).

The interval 1 to 37 (MSESPSANISDADKSAITPTTGDTSQQDVKPSTEHIN) is disordered. Over residues 17-30 (ITPTTGDTSQQDVK) the composition is skewed to polar residues. Residues 35–115 (HINLKVVGQD…LEQLGGCTHL (81 aa)) enclose the Ubiquitin-like domain. A Glycyl lysine isopeptide (Gly-Lys) (interchain with K-? in acceptor proteins) cross-link involves residue Gly111. A propeptide spanning residues 112–117 (CTHLCL) is cleaved from the precursor.

This sequence belongs to the ubiquitin family. SUMO subfamily. In terms of assembly, interacts with rfp1.

The protein localises to the nucleus. Required for chromosome segregation where it may be involved in microtubule assembly. Loss of smt3 leads to an increase in telomere length. The protein is Ubiquitin-like protein pmt3/smt3 (pmt3) of Schizosaccharomyces pombe (strain 972 / ATCC 24843) (Fission yeast).